We begin with the raw amino-acid sequence, 323 residues long: Aquaporin-4 (323 aa).

The Cytoplasmic segment spans residues 1 to 36 (MSDRPTARRWGKCGPLCTRENIMVAFKGVWTQAFWK). Residues Cys13 and Cys17 are each lipidated (S-palmitoyl cysteine). A helical membrane pass occupies residues 37–57 (AVTAEFLAMLIFVLLSLGSTI). Residues 58–69 (NWGGTEKPLPVD) are Extracellular-facing. The helical transmembrane segment at 70-89 (MVLISLCFGLSIATMVQCFG) threads the bilayer. Over 90–93 (HISG) the chain is Cytoplasmic. The segment at residues 94–101 (GHINPAVT) is an intramembrane region (discontinuously helical). An NPA 1 motif is present at residues 97–99 (NPA). Residues 102–115 (VAMVCTRKISIAKS) lie on the Cytoplasmic side of the membrane. Ser111 bears the Phosphoserine; by PKG mark. Residues 116-136 (VFYIAAQCLGAIIGAGILYLV) form a helical membrane-spanning segment. Over 137–155 (TPPSVVGGLGVTMVHGNLT) the chain is Extracellular. The N-linked (GlcNAc...) asparagine glycan is linked to Asn153. Residues 156-176 (AGHGLLVELIITFQLVFTIFA) traverse the membrane as a helical segment. The Cytoplasmic segment spans residues 177–184 (SCDSKRTD). At Ser180 the chain carries Phosphoserine; by PKC. The helical transmembrane segment at 185–205 (VTGSIALAIGFSVAIGHLFAI) threads the bilayer. N-linked (GlcNAc...) asparagine glycosylation occurs at Asn206. Topologically, residues 206 to 208 (NYT) are extracellular. Residues 209–222 (GASMNPARSFGPAV) constitute an intramembrane region (discontinuously helical). An NPA 2 motif is present at residues 213 to 215 (NPA). Residues 223–231 (IMGNWENHW) lie on the Extracellular side of the membrane. Residues 232 to 252 (IYWVGPIIGAVLAGGLYEYVF) form a helical membrane-spanning segment. Residues 253–323 (CPDVEFKRRF…DQSGEVLSSV (71 aa)) are Cytoplasmic-facing. 2 positions are modified to phosphoserine: Ser276 and Ser285. Thr289 bears the Phosphothreonine mark. Ser321 carries the phosphoserine modification.

It belongs to the MIP/aquaporin (TC 1.A.8) family. As to quaternary structure, homotetramer. The tetramers can form oligomeric arrays in membranes. The size of the oligomers differs between tissues and is smaller in skeletal muscle than in brain. Interaction between AQP4 oligomeric arrays in close-by cells can contribute to cell-cell adhesion. Part of a complex containing MLC1, TRPV4, HEPACAM and ATP1B1. In terms of processing, phosphorylation by PKC at Ser-180 reduces conductance by 50%. Phosphorylation by PKG at Ser-111 in response to glutamate increases conductance by 40%. Isoform 2: Palmitoylated on its N-terminal region. Isoform 1: Not palmitoylated. In terms of tissue distribution, detected in skeletal muscle. Detected in stomach, along the glandular base region of the fundic gland (at protein level). Detected in brain, lung and skeletal muscle, and at much lower levels in heart and ovary.

The protein resides in the cell membrane. It is found in the basolateral cell membrane. Its subcellular location is the endosome membrane. It localises to the sarcolemma. The protein localises to the cell projection. It catalyses the reaction H2O(in) = H2O(out). Forms a water-specific channel. Plays an important role in brain water homeostasis. It is involved in glymphatic solute transport and is required for a normal rate of water exchange across the blood brain interface. Required for normal levels of cerebrospinal fluid influx into the brain cortex and parenchyma along paravascular spaces that surround penetrating arteries, and for normal drainage of interstitial fluid along paravenous drainage pathways. Thereby, it is required for normal clearance of solutes from the brain interstitial fluid, including soluble beta-amyloid peptides derived from APP. Plays a redundant role in urinary water homeostasis and urinary concentrating ability. The protein is Aquaporin-4 (AQP4) of Homo sapiens (Human).